A 955-amino-acid chain; its full sequence is Eukaryotic translation initiation factor 3 subunit C (955 aa).

Disordered stretches follow at residues 1-22 and 157-299; these read MSRF…SEPV and RAAP…EEGW. Residues 162–183 are compositionally biased toward acidic residues; the sequence is DFAEEEEDDEREDEKGSDEEEE. Over residues 206 to 218 the composition is skewed to low complexity; the sequence is VKPVADSDSSDWG. The segment covering 219-229 has biased composition (acidic residues); sequence SDSDSDSTSSD. A compositionally biased stretch (basic and acidic residues) spans 230-250; sequence EDAKYTSIRDRFLKKPEKGTE. Residues 288 to 297 show a composition bias toward acidic residues; sequence MFDENEEEEE. Residues 658–834 form the PCI domain; sequence FHMHINLELL…ETIVMHRSEP (177 aa). The interval 865-955 is disordered; that stretch reads NFFQRGGNQG…RNVEYQNKAE (91 aa). Positions 882-894 are enriched in low complexity; that stretch reads YRNQNQNQNWNNN. Residues 911–955 are compositionally biased toward basic and acidic residues; it reads GEGREQREHHRDHHRDQREHREHQNREFREQREQMRNVEYQNKAE.

Belongs to the eIF-3 subunit C family. As to quaternary structure, component of the eukaryotic translation initiation factor 3 (eIF-3) complex.

Its subcellular location is the cytoplasm. Its function is as follows. Component of the eukaryotic translation initiation factor 3 (eIF-3) complex, which is involved in protein synthesis of a specialized repertoire of mRNAs and, together with other initiation factors, stimulates binding of mRNA and methionyl-tRNAi to the 40S ribosome. The eIF-3 complex specifically targets and initiates translation of a subset of mRNAs involved in cell proliferation. The chain is Eukaryotic translation initiation factor 3 subunit C from Anopheles gambiae (African malaria mosquito).